Reading from the N-terminus, the 342-residue chain is Glucokinase (342 aa).

7–12 lines the ATP pocket; the sequence is GDIGGT.

The protein belongs to the bacterial glucokinase family.

The protein localises to the cytoplasm. The enzyme catalyses D-glucose + ATP = D-glucose 6-phosphate + ADP + H(+). This is Glucokinase from Trichormus variabilis (strain ATCC 29413 / PCC 7937) (Anabaena variabilis).